The primary structure comprises 254 residues: uncharacterized protein (254 aa).

The next 5 helical transmembrane spans lie at methionine 33–isoleucine 53, phenylalanine 70–serine 90, phenylalanine 92–methionine 112, phenylalanine 133–isoleucine 153, and phenylalanine 223–phenylalanine 243.

This sequence to M.jannaschii MJ0902.

It is found in the cell membrane. This is an uncharacterized protein from Methanocaldococcus jannaschii (strain ATCC 43067 / DSM 2661 / JAL-1 / JCM 10045 / NBRC 100440) (Methanococcus jannaschii).